The chain runs to 628 residues: Chaperone protein HtpG (628 aa).

An a; substrate-binding region spans residues methionine 1–arginine 339. A b region spans residues glutamate 340 to lysine 556. The c stretch occupies residues leucine 557 to glycine 628.

This sequence belongs to the heat shock protein 90 family. As to quaternary structure, homodimer.

Its subcellular location is the cytoplasm. Functionally, molecular chaperone. Has ATPase activity. The protein is Chaperone protein HtpG of Actinobacillus succinogenes (strain ATCC 55618 / DSM 22257 / CCUG 43843 / 130Z).